Here is a 228-residue protein sequence, read N- to C-terminus: UPF0758 protein RALTA_A2508 (228 aa).

The MPN domain maps to 102–224 (GFDSPDSVRS…IRSLAESCER (123 aa)). Residues histidine 173, histidine 175, and aspartate 186 each contribute to the Zn(2+) site. Residues 173–186 (HNHPRGTTAPSQSD) carry the JAMM motif motif.

It belongs to the UPF0758 family.

The protein is UPF0758 protein RALTA_A2508 of Cupriavidus taiwanensis (strain DSM 17343 / BCRC 17206 / CCUG 44338 / CIP 107171 / LMG 19424 / R1) (Ralstonia taiwanensis (strain LMG 19424)).